The primary structure comprises 715 residues: Tensin-4 (715 aa).

The N-terminal stretch at Met-1–Leu-18 is a signal peptide. Ser-82 is subject to Phosphoserine. Disordered stretches follow at residues Arg-159 to Gly-183, Arg-195 to Val-251, Ser-291 to Ser-364, and Leu-376 to Met-435. The segment covering Ser-197–Asn-206 has biased composition (polar residues). Ser-248 is subject to Phosphoserine. The segment covering Ser-291–Leu-325 has biased composition (low complexity). Residues Trp-449 to Gln-556 enclose the SH2 domain. The PTB domain occupies Cys-582–Val-705.

It belongs to the PTEN phosphatase protein family. As to quaternary structure, interacts (via SH2 domain) with Rho GTPase-activating protein DLC1 (via C-terminus); the interaction is independent of DLC1 tyrosine phosphorylation. Interacts with integrin ITGB1; the interaction displaces tensin TNS3 from the ITGB1 cytoplasmic tail and promotes ITGB1 stability. Interacts (via SH2 domain) with E3 ubiquitin-protein ligase CBL (phosphorylated on 'Tyr-774'); the interaction is enhanced in the presence of EGF and reduces interaction of CBL with EGFR. Interacts (via SH2 domain) with receptor tyrosine kinase MET (when phosphorylated); the interaction increases MET protein stability. Post-translationally, proteolytically cleaved by caspase-3 during apoptosis. Expressed at low levels in colon (at protein level). Expressed in prostate and placenta.

It is found in the cell junction. The protein localises to the focal adhesion. It localises to the cytoplasm. Its subcellular location is the cytoskeleton. Promotes EGF-induced cell migration by displacing tensin TNS3 from the cytoplasmic tail of integrin ITGB1 which results in dissociation of TNS3 from focal adhesions, disassembly of actin stress fibers and initiation of cell migration. Suppresses ligand-induced degradation of EGFR by reducing EGFR ubiquitination in the presence of EGF. Increases MET protein stability by inhibiting MET endocytosis and subsequent lysosomal degradation which leads to increased cell survival, proliferation and migration. This Homo sapiens (Human) protein is Tensin-4 (TNS4).